The sequence spans 353 residues: Spermidine/putrescine import ATP-binding protein PotA (353 aa).

Residues 7 to 237 (IRFERVTKEY…PINRFVADFI (231 aa)) enclose the ABC transporter domain. 39-46 (GPSGCGKT) is an ATP binding site.

Belongs to the ABC transporter superfamily. Spermidine/putrescine importer (TC 3.A.1.11.1) family. The complex is composed of two ATP-binding proteins (PotA), two transmembrane proteins (PotB and PotC) and a solute-binding protein (PotD).

It is found in the cell membrane. It carries out the reaction ATP + H2O + polyamine-[polyamine-binding protein]Side 1 = ADP + phosphate + polyamineSide 2 + [polyamine-binding protein]Side 1.. In terms of biological role, part of the ABC transporter complex PotABCD involved in spermidine/putrescine import. Responsible for energy coupling to the transport system. The protein is Spermidine/putrescine import ATP-binding protein PotA of Geobacillus kaustophilus (strain HTA426).